The primary structure comprises 118 residues: Holo-[acyl-carrier-protein] synthase (118 aa).

Mg(2+) is bound by residues Asp-8 and Glu-58.

This sequence belongs to the P-Pant transferase superfamily. AcpS family. The cofactor is Mg(2+).

The protein localises to the cytoplasm. The catalysed reaction is apo-[ACP] + CoA = holo-[ACP] + adenosine 3',5'-bisphosphate + H(+). Its function is as follows. Transfers the 4'-phosphopantetheine moiety from coenzyme A to a Ser of acyl-carrier-protein. This Streptococcus pyogenes serotype M5 (strain Manfredo) protein is Holo-[acyl-carrier-protein] synthase.